A 405-amino-acid chain; its full sequence is Eukaryotic initiation factor 4A (405 aa).

The short motif at 31–59 (ECFEALNLEGDLLRGIFAYGFEKPSAIQQ) is the Q motif element. In terms of domain architecture, Helicase ATP-binding spans 62–232 (IKPILDGYDT…TQFMRDPKRI (171 aa)). 75–82 (AQSGTGKT) is an ATP binding site. The DEAD box motif lies at 180-183 (DEAD). Positions 243–404 (GIRQFYVGVE…EMPMGITDIL (162 aa)) constitute a Helicase C-terminal domain.

This sequence belongs to the DEAD box helicase family. eIF4A subfamily. In terms of assembly, eIF4F is a multi-subunit complex, the composition of which varies with external and internal environmental conditions. It is composed of at least EIF4A, EIF4E and EIF4G.

It carries out the reaction ATP + H2O = ADP + phosphate + H(+). ATP-dependent RNA helicase which is a subunit of the eIF4F complex involved in cap recognition and is required for mRNA binding to ribosome. In the current model of translation initiation, eIF4A unwinds RNA secondary structures in the 5'-UTR of mRNAs which is necessary to allow efficient binding of the small ribosomal subunit, and subsequent scanning for the initiator codon. This is Eukaryotic initiation factor 4A (EIF4-A) from Cryptosporidium parvum.